Reading from the N-terminus, the 64-residue chain is Beta-defensin 13 (64 aa).

The first 22 residues, methionine 1–glycine 22, serve as a signal peptide directing secretion. Disulfide bonds link cysteine 30–cysteine 57, cysteine 37–cysteine 51, and cysteine 41–cysteine 58.

Belongs to the beta-defensin family. As to expression, expressed in testis and to a lesser extent in epididymis (caput, corpus and cauda). Also weakly expressed in kidneys.

Its subcellular location is the secreted. Functionally, has antibacterial activity. In Mus musculus (Mouse), this protein is Beta-defensin 13 (Defb13).